The primary structure comprises 156 residues: E3 ubiquitin-protein ligase LAP (156 aa).

An RING-CH-type zinc finger spans residues 1-55 (MSDICWICNDVCDERNNFCGCNEEYKVVHIKCMQLWINYSKKKECNLCKTKYNIK). At 1–73 (MSDICWICND…WNWCFNDKKT (73 aa)) the chain is on the cytoplasmic side. Zn(2+) contacts are provided by cysteine 5, cysteine 8, cysteine 19, cysteine 21, histidine 29, cysteine 32, cysteine 45, and cysteine 48. A helical transmembrane segment spans residues 74–94 (TLFKIFFILFALVFIFLTITL). At 95–111 (SNDMANLVTGINDLICS) the chain is on the lumenal side. The helical transmembrane segment at 112–132 (IIFLIVYTVVMLTSICFSVFV) threads the bilayer. The Cytoplasmic segment spans residues 133-156 (VAIVVDFLLEAKEKNSFLTIREIV).

This sequence belongs to the poxviridae LAP protein family.

It localises to the host membrane. Its subcellular location is the host Golgi apparatus. The protein resides in the host trans-Golgi network membrane. It is found in the host early endosome membrane. The enzyme catalyses S-ubiquitinyl-[E2 ubiquitin-conjugating enzyme]-L-cysteine + [acceptor protein]-L-lysine = [E2 ubiquitin-conjugating enzyme]-L-cysteine + N(6)-ubiquitinyl-[acceptor protein]-L-lysine.. In terms of biological role, E3 ubiquitin-protein ligase which promotes ubiquitination and subsequent degradation of host MHC-I and CD4 molecules, presumably to prevent lysis of infected cells by cytotoxic T-lymphocytes and NK cell. Binds target molecules through transmembrane interaction. The result of this ubiquitination is the enhancement of the endocytosis of the target chain and the delivery to the lysosome, where it is proteolytically destroyed. The polypeptide is E3 ubiquitin-protein ligase LAP (Yaba-like disease virus (YLDV)).